Here is a 542-residue protein sequence, read N- to C-terminus: CTP synthase (542 aa).

The interval 1 to 265 is amidoligase domain; it reads MARYVFITGG…DSEVLAAFGI (265 aa). Residue Ser13 participates in CTP binding. Ser13 serves as a coordination point for UTP. ATP is bound by residues 14 to 19 and Asp71; that span reads SLGKGI. Positions 71 and 139 each coordinate Mg(2+). CTP-binding positions include 146 to 148, 186 to 191, and Lys222; these read DIE and KTKPTQ. Residues 186–191 and Lys222 each bind UTP; that span reads KTKPTQ. The region spanning 291-541 is the Glutamine amidotransferase type-1 domain; that stretch reads TIAIVGKYTG…VEAAVEQSRL (251 aa). Gly353 contacts L-glutamine. The Nucleophile; for glutamine hydrolysis role is filled by Cys380. Residues 381–384, Glu404, and Arg469 contribute to the L-glutamine site; that span reads FGMQ. Active-site residues include His514 and Glu516.

This sequence belongs to the CTP synthase family. Homotetramer.

It carries out the reaction UTP + L-glutamine + ATP + H2O = CTP + L-glutamate + ADP + phosphate + 2 H(+). It catalyses the reaction L-glutamine + H2O = L-glutamate + NH4(+). The enzyme catalyses UTP + NH4(+) + ATP = CTP + ADP + phosphate + 2 H(+). It functions in the pathway pyrimidine metabolism; CTP biosynthesis via de novo pathway; CTP from UDP: step 2/2. Its activity is regulated as follows. Allosterically activated by GTP, when glutamine is the substrate; GTP has no effect on the reaction when ammonia is the substrate. The allosteric effector GTP functions by stabilizing the protein conformation that binds the tetrahedral intermediate(s) formed during glutamine hydrolysis. Inhibited by the product CTP, via allosteric rather than competitive inhibition. Its function is as follows. Catalyzes the ATP-dependent amination of UTP to CTP with either L-glutamine or ammonia as the source of nitrogen. Regulates intracellular CTP levels through interactions with the four ribonucleotide triphosphates. This is CTP synthase from Agrobacterium fabrum (strain C58 / ATCC 33970) (Agrobacterium tumefaciens (strain C58)).